The primary structure comprises 210 residues: Calaxin (210 aa).

3 consecutive EF-hand domains span residues 64–99 (TDDM…FLRG), 100–135 (TLDE…SLIR), and 145–180 (GIKD…ENLL). Residues Asp-77, Asp-79, Asp-81, Tyr-83, Glu-88, Asp-113, Asn-115, Asp-117, Tyr-119, Glu-124, Asp-158, Asp-160, Asp-162, Arg-164, and Asp-169 each contribute to the Ca(2+) site.

Component of the outer dynein arm-docking complex along with ODAD1, ODAD2, ODAD3 and ODAD4.

It localises to the cytoplasm. The protein localises to the cytoskeleton. The protein resides in the cilium axoneme. Its subcellular location is the cell projection. It is found in the cilium. It localises to the flagellum. Its function is as follows. Component of the outer dynein arm-docking complex (ODA-DC) that mediates outer dynein arms (ODA) binding onto the doublet microtubule. Seems to regulate the assembly of both ODAs and their axonemal docking complex onto ciliary microtubules. Regulates ciliary and flagellar motility and is required for cilia-driven determination of body laterality. In terms of biological role, regulates ciliary motility and is required for cilia-driven determination of body laterality. This is Calaxin (clxn) from Danio rerio (Zebrafish).